The sequence spans 269 residues: MKAQALLLCSLVLLAQSTDVDDEGSGEVFLQKVSSSVSITASLATTMLTSVTNKTTQNVSVTTIDSLSTSPMHNATSNTSYSQTTPYSQTSLSSSVLISTPQMLNSTPNKPLSSTKLTPKSQSSSQSTKTTKQASKNLTTSKLATSFSSTYMTTSDQPYSNNTANKILLNTTYIYLSTLSKITKLFMQEQNKTTQEPFELITPSSTERDSSTLSKHTNKLKPFKPKTQPIVNMQRTWIYPLTGIVSIVVLLIIMSCIHCYIRRFDEHFE.

Residues Asn53, Asn58, Asn74, and Asn78 are each glycosylated (N-linked (GlcNAc...) asparagine; by host). 2 disordered regions span residues 67-87 (LSTS…TTPY) and 103-137 (MLNS…ASKN). Positions 76 to 87 (TSNTSYSQTTPY) are enriched in low complexity. Residues 103 to 112 (MLNSTPNKPL) are compositionally biased toward polar residues. Positions 113–136 (SSTKLTPKSQSSSQSTKTTKQASK) are enriched in low complexity. N-linked (GlcNAc...) asparagine; by host glycosylation is found at Asn137, Asn161, Asn170, and Asn191.

The protein is Gene 51 glycoprotein (51) of Saimiriine herpesvirus 2 (strain 11) (SaHV-2).